Reading from the N-terminus, the 514-residue chain is Histidine ammonia-lyase (514 aa).

A cross-link (5-imidazolinone (Ala-Gly)) is located at residues 142–144; that stretch reads ASG. Ser-143 carries the post-translational modification 2,3-didehydroalanine (Ser).

Belongs to the PAL/histidase family. Post-translationally, contains an active site 4-methylidene-imidazol-5-one (MIO), which is formed autocatalytically by cyclization and dehydration of residues Ala-Ser-Gly.

The protein localises to the cytoplasm. The catalysed reaction is L-histidine = trans-urocanate + NH4(+). Its pathway is amino-acid degradation; L-histidine degradation into L-glutamate; N-formimidoyl-L-glutamate from L-histidine: step 1/3. This chain is Histidine ammonia-lyase, found in Sorangium cellulosum (strain So ce56) (Polyangium cellulosum (strain So ce56)).